The chain runs to 257 residues: Imidazole glycerol phosphate synthase subunit HisF (257 aa).

Residues Asp-12 and Asp-131 contribute to the active site.

The protein belongs to the HisA/HisF family. In terms of assembly, heterodimer of HisH and HisF.

Its subcellular location is the cytoplasm. The enzyme catalyses 5-[(5-phospho-1-deoxy-D-ribulos-1-ylimino)methylamino]-1-(5-phospho-beta-D-ribosyl)imidazole-4-carboxamide + L-glutamine = D-erythro-1-(imidazol-4-yl)glycerol 3-phosphate + 5-amino-1-(5-phospho-beta-D-ribosyl)imidazole-4-carboxamide + L-glutamate + H(+). It functions in the pathway amino-acid biosynthesis; L-histidine biosynthesis; L-histidine from 5-phospho-alpha-D-ribose 1-diphosphate: step 5/9. In terms of biological role, IGPS catalyzes the conversion of PRFAR and glutamine to IGP, AICAR and glutamate. The HisF subunit catalyzes the cyclization activity that produces IGP and AICAR from PRFAR using the ammonia provided by the HisH subunit. This Teredinibacter turnerae (strain ATCC 39867 / T7901) protein is Imidazole glycerol phosphate synthase subunit HisF.